We begin with the raw amino-acid sequence, 358 residues long: Arogenate dehydrogenase 2, chloroplastic (358 aa).

Residues 1 to 36 (MLLHFSPAKPLISPPNLRRNSPTFLISPPRSLRIRA) constitute a chloroplast transit peptide. In terms of domain architecture, Prephenate/arogenate dehydrogenase spans 59-338 (LKIAVLGFGN…KKTEQKLLND (280 aa)). The segment at 336-358 (LNDGGVVPMNDISSSSSSSSSSS) is disordered. Residues 348–358 (SSSSSSSSSSS) show a composition bias toward low complexity.

It belongs to the prephenate/arogenate dehydrogenase family. Expressed in roots, stems, leaves, flowers, siliques and seeds. More abundant in seeds.

Its subcellular location is the plastid. The protein resides in the chloroplast. It catalyses the reaction L-arogenate + NADP(+) = L-tyrosine + CO2 + NADPH. The protein operates within amino-acid biosynthesis; L-tyrosine biosynthesis; L-tyrosine from L-arogenate (NADP(+) route): step 1/1. Its function is as follows. Involved in the biosynthesis of tyrosine. Has a weak prephenate dehydrogenase activity. This is Arogenate dehydrogenase 2, chloroplastic (TYRAAT2) from Arabidopsis thaliana (Mouse-ear cress).